The chain runs to 524 residues: Thioredoxin reductase 2, mitochondrial (524 aa).

The N-terminal 36 residues, 1-36 (MAAMAVALRGLGGRFRWRTQAVAGGVRGAARGAAAG), are a transit peptide targeting the mitochondrion. 41-70 (DLLVVGGGSGGLACAKEAAQLGRKVAVVDY) serves as a coordination point for FAD. A disulfide bond links Cys-86 and Cys-91. An N6-succinyllysine mark is found at Lys-175 and Lys-329. His-497 functions as the Proton acceptor in the catalytic mechanism. A cross-link (cysteinyl-selenocysteine (Cys-Sec)) is located at residues 522-523 (CU). Residue Sec-523 is a non-standard amino acid, selenocysteine.

This sequence belongs to the class-I pyridine nucleotide-disulfide oxidoreductase family. Homodimer. FAD serves as cofactor. Highly expressed in the prostate, ovary, liver, testis, uterus, colon and small intestine. Intermediate levels in brain, skeletal muscle, heart and spleen. Low levels in placenta, pancreas, thymus and peripheral blood leukocytes. According to PubMed:10608886, high levels in kidney, whereas according to PubMed:9923614, levels are low. High expression is observed in the adrenal cortex.

It localises to the mitochondrion. The catalysed reaction is [thioredoxin]-dithiol + NADP(+) = [thioredoxin]-disulfide + NADPH + H(+). Involved in the control of reactive oxygen species levels and the regulation of mitochondrial redox homeostasis. Maintains thioredoxin in a reduced state. May play a role in redox-regulated cell signaling. This chain is Thioredoxin reductase 2, mitochondrial, found in Homo sapiens (Human).